We begin with the raw amino-acid sequence, 128 residues long: Head peptide (128 aa).

The first 22 residues, 1-22 (MWKFASIVVLVVCLAWAVYCED), serve as a signal peptide directing secretion. Gln23 is subject to Pyrrolidone carboxylic acid. The residue at position 26 (Pro26) is a Hydroxyproline; partial. Residues 27 to 128 (SLKTRFGRSA…GRANKKRAAN (102 aa)) form a disordered region. A Phenylalanine amide modification is found at Phe32. Positions 35–55 (SADEPESDNYVSNDIMEKRSA) are excised as a propeptide. Gln56 carries the pyrrolidone carboxylic acid modification. Pro59 carries the hydroxyproline; partial modification. Position 65 is a phenylalanine amide (Phe65). The span at 66–78 (GRSEGAEVMEKRS) shows a compositional bias: basic and acidic residues. Positions 68-79 (SEGAEVMEKRSA) are excised as a propeptide. Gln80 carries the post-translational modification Pyrrolidone carboxylic acid. The residue at position 83 (Pro83) is a Hydroxyproline; partial. Position 89 is a phenylalanine amide (Phe89). The propeptide occupies 92–128 (SVANPESDGYMRKRSAESEPFVTRIRHGRANKKRAAN). Basic residues predominate over residues 115-128 (RIRHGRANKKRAAN).

This sequence belongs to the NPY family. In terms of tissue distribution, expressed in the brain, terminal ganglion, and midgut of adults: numerous neurosecretory cells and midgut endocrine cells. Expression is dynamic depending on reproductive cycle.

The protein resides in the secreted. Functionally, has a role in inhibiting host-seeking behavior during a reproductive cycle. This Aedes aegypti (Yellowfever mosquito) protein is Head peptide.